Reading from the N-terminus, the 393-residue chain is tRNA(Met) cytidine acetate ligase (393 aa).

Positions 81, 142, and 167 each coordinate ATP.

The protein belongs to the TmcAL family.

The protein resides in the cytoplasm. It catalyses the reaction cytidine(34) in elongator tRNA(Met) + acetate + ATP = N(4)-acetylcytidine(34) in elongator tRNA(Met) + AMP + diphosphate. Its function is as follows. Catalyzes the formation of N(4)-acetylcytidine (ac(4)C) at the wobble position of elongator tRNA(Met), using acetate and ATP as substrates. First activates an acetate ion to form acetyladenylate (Ac-AMP) and then transfers the acetyl group to tRNA to form ac(4)C34. This Bacillus cereus (strain 03BB102) protein is tRNA(Met) cytidine acetate ligase.